The primary structure comprises 341 residues: Putative gustatory receptor 9a (341 aa).

Position 1 (methionine 1) is a topological domain, cytoplasmic. Residues 2–22 (SLWLEHFLTGYFQLCGLVCGW) traverse the membrane as a helical segment. The Extracellular segment spans residues 23-30 (SGSRLGRL). Residues 31–51 (LSSTFLVLILIELVGEIETYF) form a helical membrane-spanning segment. Over 52-68 (TEENPDNESVPAYFAKV) the chain is Cytoplasmic. Residues 69–89 (IMGVNMAYKMIHAWIALSALF) traverse the membrane as a helical segment. The Extracellular segment spans residues 90–113 (ECRRFRYLLEELPPVKATSFIYRH). The helical transmembrane segment at 114-134 (LILEIILFACNAFLVLSEYTI) threads the bilayer. Residues 135–202 (RGIYLENLRY…LAKVTRSLSH (68 aa)) are Cytoplasmic-facing. A helical transmembrane segment spans residues 203–223 (LFGLSLLLLNVLCLGDWIIVC). Residues 224–233 (NVYFMVAYLQ) are Extracellular-facing. The helical transmembrane segment at 234–254 (VLPATLFLFGQVMFVVCPTLI) threads the bilayer. The Cytoplasmic portion of the chain corresponds to 255 to 318 (KIWSICAASH…GIYHLNLQTL (64 aa)). Residues 319-339 (AGMFFFILEALVIFLQFVSLV) form a helical membrane-spanning segment. At 340–341 (RT) the chain is on the extracellular side.

Belongs to the insect chemoreceptor superfamily. Gustatory receptor (GR) family. Gr2a subfamily. In terms of tissue distribution, expressed in neurons of the terminal external chemosensory organ of larvae.

It localises to the cell membrane. Its function is as follows. Probable gustatory receptor which mediates acceptance or avoidance behavior, depending on its substrates. The chain is Putative gustatory receptor 9a (Gr9a) from Drosophila melanogaster (Fruit fly).